A 447-amino-acid chain; its full sequence is Phosphoglucosamine mutase (447 aa).

Ser-100 serves as the catalytic Phosphoserine intermediate. Mg(2+) contacts are provided by Ser-100, Asp-239, Asp-241, and Asp-243. Ser-100 carries the post-translational modification Phosphoserine.

The protein belongs to the phosphohexose mutase family. Mg(2+) serves as cofactor. In terms of processing, activated by phosphorylation.

The enzyme catalyses alpha-D-glucosamine 1-phosphate = D-glucosamine 6-phosphate. Its function is as follows. Catalyzes the conversion of glucosamine-6-phosphate to glucosamine-1-phosphate. The sequence is that of Phosphoglucosamine mutase from Thermoanaerobacter pseudethanolicus (strain ATCC 33223 / 39E) (Clostridium thermohydrosulfuricum).